The chain runs to 88 residues: Small ribosomal subunit protein uS17 (88 aa).

It belongs to the universal ribosomal protein uS17 family. In terms of assembly, part of the 30S ribosomal subunit.

One of the primary rRNA binding proteins, it binds specifically to the 5'-end of 16S ribosomal RNA. The protein is Small ribosomal subunit protein uS17 of Pseudomonas entomophila (strain L48).